The sequence spans 88 residues: Small ribosomal subunit protein bS20 (88 aa).

The protein belongs to the bacterial ribosomal protein bS20 family.

In terms of biological role, binds directly to 16S ribosomal RNA. This chain is Small ribosomal subunit protein bS20, found in Maricaulis maris (strain MCS10) (Caulobacter maris).